The sequence spans 269 residues: Formamidopyrimidine-DNA glycosylase (269 aa).

Catalysis depends on proline 2, which acts as the Schiff-base intermediate with DNA. Glutamate 3 functions as the Proton donor in the catalytic mechanism. Lysine 57 functions as the Proton donor; for beta-elimination activity in the catalytic mechanism. DNA is bound by residues histidine 90, arginine 109, and lysine 150. The FPG-type zinc-finger motif lies at 235-269 (QVYGRKGEPCRVCGTPIVATKHAQRATFYCRQCQK). Catalysis depends on arginine 259, which acts as the Proton donor; for delta-elimination activity.

It belongs to the FPG family. As to quaternary structure, monomer. Zn(2+) is required as a cofactor.

The catalysed reaction is Hydrolysis of DNA containing ring-opened 7-methylguanine residues, releasing 2,6-diamino-4-hydroxy-5-(N-methyl)formamidopyrimidine.. The enzyme catalyses 2'-deoxyribonucleotide-(2'-deoxyribose 5'-phosphate)-2'-deoxyribonucleotide-DNA = a 3'-end 2'-deoxyribonucleotide-(2,3-dehydro-2,3-deoxyribose 5'-phosphate)-DNA + a 5'-end 5'-phospho-2'-deoxyribonucleoside-DNA + H(+). Involved in base excision repair of DNA damaged by oxidation or by mutagenic agents. Acts as a DNA glycosylase that recognizes and removes damaged bases. Has a preference for oxidized purines, such as 7,8-dihydro-8-oxoguanine (8-oxoG). Has AP (apurinic/apyrimidinic) lyase activity and introduces nicks in the DNA strand. Cleaves the DNA backbone by beta-delta elimination to generate a single-strand break at the site of the removed base with both 3'- and 5'-phosphates. This is Formamidopyrimidine-DNA glycosylase from Escherichia coli O157:H7.